The sequence spans 257 residues: MEKPVICRIKEIIEESPTVKTFVVDKDFDFKPGQFAMLWLPGVDEKPFGFSSKNSFSVARVGEFTKKMHELKEGDIIGVRGPYGTYFEPIGDKVLAVAGGIGAAPIITAVEEFSKQGIEITTILGARTKEELLFLDRFEKVSRLEICTDDGSFGFKGFTTEKMKEVLKEEKFDLIITCGPEIMMKKVVEIANEYNIPVQVSMERYMKCGIGICGQCCVDDEGLCVCKDGPVFWGDKLKFIREFGKYKRDASGKKIYY.

The FAD-binding FR-type domain occupies 2-89 (EKPVICRIKE…RGPYGTYFEP (88 aa)). [2Fe-2S] cluster-binding residues include C208, C213, C216, and C226.

This sequence belongs to the PyrK family. Heterotetramer of 2 PyrK and 2 PyrD type B subunits. The cofactor is [2Fe-2S] cluster. It depends on FAD as a cofactor.

It functions in the pathway pyrimidine metabolism; UMP biosynthesis via de novo pathway; orotate from (S)-dihydroorotate (NAD(+) route): step 1/1. Responsible for channeling the electrons from the oxidation of dihydroorotate from the FMN redox center in the PyrD type B subunit to the ultimate electron acceptor NAD(+). This is Probable dihydroorotate dehydrogenase B (NAD(+)), electron transfer subunit from Methanocaldococcus jannaschii (strain ATCC 43067 / DSM 2661 / JAL-1 / JCM 10045 / NBRC 100440) (Methanococcus jannaschii).